Reading from the N-terminus, the 612-residue chain is Anaerobic magnesium-protoporphyrin IX monomethyl ester cyclase (612 aa).

The B12-binding domain maps to 9–143 (NYHSGGAEIA…KAYEADNFAE (135 aa)). Positions 190 to 417 (PLGVRVAIPN…MKPKALTRGE (228 aa)) constitute a Radical SAM core domain. Cysteine 204, cysteine 208, and cysteine 211 together coordinate [4Fe-4S] cluster.

The protein belongs to the BchE family. It depends on [4Fe-4S] cluster as a cofactor. The cofactor is adenosylcob(III)alamin.

The catalysed reaction is Mg-protoporphyrin IX 13-monomethyl ester + 3 S-adenosyl-L-methionine + H2O = 3,8-divinyl protochlorophyllide a + 3 5'-deoxyadenosine + 3 L-methionine + 4 H(+). It functions in the pathway porphyrin-containing compound metabolism; bacteriochlorophyll biosynthesis (light-independent). Functionally, involved in the tetrapyrrole biosynthetic pathways leading to chlorophyll and bacteriochlorophyll (BChl). Catalyzes the anaerobic formation of the isocyclic ring (E-ring) in Mg-protoporphyrin monomethyl ester (MPE) to yield protochlorophyllide a (PChlide a) via a six-electron oxidation and the formation of an oxo group at position C13 using oxygen from a water molecule. This Cereibacter sphaeroides (strain ATCC 17023 / DSM 158 / JCM 6121 / CCUG 31486 / LMG 2827 / NBRC 12203 / NCIMB 8253 / ATH 2.4.1.) (Rhodobacter sphaeroides) protein is Anaerobic magnesium-protoporphyrin IX monomethyl ester cyclase.